A 410-amino-acid polypeptide reads, in one-letter code: D-amino acid dehydrogenase (410 aa).

Residue 9–14 (GGGIVG) coordinates FAD.

The protein belongs to the DadA oxidoreductase family. FAD serves as cofactor.

It is found in the cell inner membrane. The enzyme catalyses a D-alpha-amino acid + a quinone + H2O = a 2-oxocarboxylate + a quinol + NH4(+). With respect to regulation, activity is markedly inhibited by benzoate, and moderately by SH reagents such as p-hydroxymercuribenzoate, iodoacetamide, and iodoacetate. Functionally, catalyzes the oxidative deamination of D-amino acids. Has broad substrate specificity; is mostly active on D-proline, and to a lesser extent, on several other D-amino acids such as D-alanine, D-phenylalanine and D-serine. Mediates electron transport from D-proline to coenzyme Q1 in vitro, and is involved in the electron transport chain from D-proline to the c-type cytochrome in vivo. The chain is D-amino acid dehydrogenase from Helicobacter pylori (Campylobacter pylori).